The primary structure comprises 166 residues: Thioredoxin, mitochondrial (166 aa).

Residues 1–59 constitute a mitochondrion transit peptide; that stretch reads MAQRLLLRRFLTSIISGKPSQSRWAPVASRALQTPQYSPGYLTVTPSQARSIYTTRVCS. A Thioredoxin domain is found at 61–166; sequence TFNIQDGPDF…LEAFLKKLIG (106 aa). Active-site nucleophile residues include cysteine 90 and cysteine 93. A disulfide bridge connects residues cysteine 90 and cysteine 93. Lysine 152 carries the post-translational modification N6-acetyllysine; alternate. Position 152 is an N6-succinyllysine; alternate (lysine 152).

This sequence belongs to the thioredoxin family. As to quaternary structure, monomer.

It is found in the mitochondrion. Functionally, important for the control of mitochondrial reactive oxygen species homeostasis, apoptosis regulation and cell viability. Is involved in various redox reactions including the reduction of protein disulfide bonds, through the reversible oxidation of its active center dithiol to a disulfide. This is Thioredoxin, mitochondrial (TXN2) from Bos taurus (Bovine).